The sequence spans 85 residues: Progonadoliberin-2 (85 aa).

An N-terminal signal peptide occupies residues 1–23 (MCVSRLALLLGLLLCVGAQLSFA). The residue at position 24 (Gln24) is a Pyrrolidone carboxylic acid. Position 33 is a glycine amide (Gly33).

It belongs to the GnRH family. In terms of tissue distribution, expressed in only one cell group in the mesencephalon.

Its subcellular location is the secreted. Functionally, stimulates the secretion of gonadotropins. The protein is Progonadoliberin-2 (gnrh2) of Haplochromis burtoni (Burton's mouthbrooder).